Here is a 459-residue protein sequence, read N- to C-terminus: V-type ATP synthase beta chain (459 aa).

Belongs to the ATPase alpha/beta chains family.

In terms of biological role, produces ATP from ADP in the presence of a proton gradient across the membrane. The V-type beta chain is a regulatory subunit. The chain is V-type ATP synthase beta chain from Thermoanaerobacter pseudethanolicus (strain ATCC 33223 / 39E) (Clostridium thermohydrosulfuricum).